A 400-amino-acid polypeptide reads, in one-letter code: Molybdenum-containing formylmethanofuran dehydrogenase 1 subunit C (400 aa).

7 tandem repeats follow at residues 76 to 88, 95 to 107, 114 to 126, 140 to 152, 159 to 171, 178 to 190, and 197 to 209. Residues 76 to 209 are 7 X 13 AA repeats of [GW]-X-X-M-X-X-G-X-I-X-[IV]-X-G; it reads GSGMKSGKII…MVSGIIKIHG (134 aa).

In the N-terminal section; belongs to the FwdC/FmdC family. This sequence in the C-terminal section; belongs to the molybdenum dinucleotide binding protein family. As to quaternary structure, consists of five subunits; FmdA, FmdB, FmdC, FmdD, and FmdE.

The enzyme catalyses N-formylmethanofuran + 2 oxidized [2Fe-2S]-[ferredoxin] + H2O = methanofuran + 2 reduced [2Fe-2S]-[ferredoxin] + CO2 + H(+). It functions in the pathway one-carbon metabolism; methanogenesis from CO(2); 5,10-methenyl-5,6,7,8-tetrahydromethanopterin from CO(2): step 1/3. Its activity is regulated as follows. Inactivated by cyanide. Its function is as follows. Catalyzes the reversible oxidation of CO(2) and methanofuran (MFR) to N-formylmethanofuran (CHO-MFR). Can only oxidize formylmethanofuran. This enzyme is oxygen-labile. This chain is Molybdenum-containing formylmethanofuran dehydrogenase 1 subunit C (fmdC), found in Methanothermobacter marburgensis (strain ATCC BAA-927 / DSM 2133 / JCM 14651 / NBRC 100331 / OCM 82 / Marburg) (Methanobacterium thermoautotrophicum).